We begin with the raw amino-acid sequence, 330 residues long: Tryptophan--tRNA ligase (330 aa).

ATP contacts are provided by residues 10–12 (QAT) and 18–19 (GN). A 'HIGH' region motif is present at residues 11–19 (ATGSLHLGN). D134 contacts L-tryptophan. Residues 146 to 148 (GED), I186, and 195 to 199 (KMSKS) contribute to the ATP site. A 'KMSKS' region motif is present at residues 195 to 199 (KMSKS).

Belongs to the class-I aminoacyl-tRNA synthetase family. As to quaternary structure, homodimer.

The protein localises to the cytoplasm. It catalyses the reaction tRNA(Trp) + L-tryptophan + ATP = L-tryptophyl-tRNA(Trp) + AMP + diphosphate + H(+). In terms of biological role, catalyzes the attachment of tryptophan to tRNA(Trp). The chain is Tryptophan--tRNA ligase from Rickettsia felis (strain ATCC VR-1525 / URRWXCal2) (Rickettsia azadi).